Here is a 124-residue protein sequence, read N- to C-terminus: Mitochondrial zinc maintenance protein 1, mitochondrial (124 aa).

It belongs to the complex I LYR family. MZM1 subfamily. As to quaternary structure, interacts with RIP1.

It localises to the mitochondrion matrix. Assembly factor required for Rieske Fe-S protein RIP1 incorporation into the cytochrome b-c1 (CIII) complex. Functions as a chaperone, binding to this subunit within the mitochondrial matrix and stabilizing it prior to its translocation and insertion into the late CIII dimeric intermediate within the mitochondrial inner membrane. Modulates the mitochondrial matrix zinc pool. This chain is Mitochondrial zinc maintenance protein 1, mitochondrial (MZM1), found in Ajellomyces dermatitidis (strain ER-3 / ATCC MYA-2586) (Blastomyces dermatitidis).